The following is a 327-amino-acid chain: Methionyl-tRNA formyltransferase (327 aa).

121–124 (SLLP) contacts (6S)-5,6,7,8-tetrahydrofolate.

The protein belongs to the Fmt family.

It catalyses the reaction L-methionyl-tRNA(fMet) + (6R)-10-formyltetrahydrofolate = N-formyl-L-methionyl-tRNA(fMet) + (6S)-5,6,7,8-tetrahydrofolate + H(+). Its function is as follows. Attaches a formyl group to the free amino group of methionyl-tRNA(fMet). The formyl group appears to play a dual role in the initiator identity of N-formylmethionyl-tRNA by promoting its recognition by IF2 and preventing the misappropriation of this tRNA by the elongation apparatus. The sequence is that of Methionyl-tRNA formyltransferase from Burkholderia vietnamiensis (strain G4 / LMG 22486) (Burkholderia cepacia (strain R1808)).